Reading from the N-terminus, the 258-residue chain is Acyl-[acyl-carrier-protein]--UDP-N-acetylglucosamine O-acyltransferase (258 aa).

This sequence belongs to the transferase hexapeptide repeat family. LpxA subfamily. Homotrimer.

The protein resides in the cytoplasm. The enzyme catalyses a (3R)-hydroxyacyl-[ACP] + UDP-N-acetyl-alpha-D-glucosamine = a UDP-3-O-[(3R)-3-hydroxyacyl]-N-acetyl-alpha-D-glucosamine + holo-[ACP]. It participates in glycolipid biosynthesis; lipid IV(A) biosynthesis; lipid IV(A) from (3R)-3-hydroxytetradecanoyl-[acyl-carrier-protein] and UDP-N-acetyl-alpha-D-glucosamine: step 1/6. Its function is as follows. Involved in the biosynthesis of lipid A, a phosphorylated glycolipid that anchors the lipopolysaccharide to the outer membrane of the cell. This is Acyl-[acyl-carrier-protein]--UDP-N-acetylglucosamine O-acyltransferase from Thiobacillus denitrificans (strain ATCC 25259 / T1).